We begin with the raw amino-acid sequence, 178 residues long: NADH-quinone oxidoreductase subunit B (178 aa).

4 residues coordinate [4Fe-4S] cluster: cysteine 45, cysteine 46, cysteine 111, and cysteine 140.

Belongs to the complex I 20 kDa subunit family. NDH-1 is composed of 15 different subunits. Subunits NuoB, C, D, E, F, and G constitute the peripheral sector of the complex. It depends on [4Fe-4S] cluster as a cofactor.

It localises to the cell membrane. The enzyme catalyses a quinone + NADH + 5 H(+)(in) = a quinol + NAD(+) + 4 H(+)(out). Its function is as follows. NDH-1 shuttles electrons from NADH, via FMN and iron-sulfur (Fe-S) centers, to quinones in the respiratory chain. The immediate electron acceptor for the enzyme in this species is believed to be a menaquinone. Couples the redox reaction to proton translocation (for every two electrons transferred, four hydrogen ions are translocated across the cytoplasmic membrane), and thus conserves the redox energy in a proton gradient. In Deinococcus deserti (strain DSM 17065 / CIP 109153 / LMG 22923 / VCD115), this protein is NADH-quinone oxidoreductase subunit B.